Consider the following 152-residue polypeptide: SKP1-like protein 11 (152 aa).

Residues 94–152 form an interaction with the F-box domain of F-box proteins region; sequence ILAANYLNIKSLLDLTCQTVADMIKGKTPEEIRSTFNIENDFTPEEEEAVRKENQWAFE.

The protein belongs to the SKP1 family. As to quaternary structure, part of a SCF (SKP1-cullin-F-box) protein ligase complex. Interacts with ADO3/FKF1, COI1/FBL2, EBF1/FBL6, PP2A13, PP2B10, UFO, SKIP2, SKIP15, SKIP16, SKIP32, CPR1/CPR30, At1g55000, At1g67340, At1g78100, At3g04660, At3g16740, At3g61590, At4g38940 and At5g49610. Expressed in young seedlings, cotyledons, roots, leaves, floral stems, inflorescences, pollen, and siliques, with a slightly higher level in inflorescence than in other tissues.

It localises to the nucleus. The protein operates within protein modification; protein ubiquitination. Functionally, involved in ubiquitination and subsequent proteasomal degradation of target proteins. Together with CUL1, RBX1 and a F-box protein, it forms a SCF E3 ubiquitin ligase complex. The functional specificity of this complex depends on the type of F-box protein. In the SCF complex, it serves as an adapter that links the F-box protein to CUL1. Plays a role during early flowers reproductive development. The sequence is that of SKP1-like protein 11 (ASK11) from Arabidopsis thaliana (Mouse-ear cress).